The following is a 190-amino-acid chain: Threonylcarbamoyl-AMP synthase (190 aa).

The YrdC-like domain occupies 7–190 (IGSIAAAVDL…ALTGELFRQG (184 aa)).

It belongs to the SUA5 family. TsaC subfamily.

It localises to the cytoplasm. The catalysed reaction is L-threonine + hydrogencarbonate + ATP = L-threonylcarbamoyladenylate + diphosphate + H2O. In terms of biological role, required for the formation of a threonylcarbamoyl group on adenosine at position 37 (t(6)A37) in tRNAs that read codons beginning with adenine. Catalyzes the conversion of L-threonine, HCO(3)(-)/CO(2) and ATP to give threonylcarbamoyl-AMP (TC-AMP) as the acyladenylate intermediate, with the release of diphosphate. The chain is Threonylcarbamoyl-AMP synthase from Salmonella typhimurium (strain LT2 / SGSC1412 / ATCC 700720).